Reading from the N-terminus, the 136-residue chain is ATP synthase epsilon chain (136 aa).

It belongs to the ATPase epsilon chain family. F-type ATPases have 2 components, CF(1) - the catalytic core - and CF(0) - the membrane proton channel. CF(1) has five subunits: alpha(3), beta(3), gamma(1), delta(1), epsilon(1). CF(0) has three main subunits: a, b and c.

It is found in the cell inner membrane. Functionally, produces ATP from ADP in the presence of a proton gradient across the membrane. The chain is ATP synthase epsilon chain from Hydrogenobaculum sp. (strain Y04AAS1).